The primary structure comprises 86 residues: Small ribosomal subunit protein bS20 (86 aa).

The segment at 1-25 is disordered; that stretch reads MANIKSQMKRIKTNEANRQRNKAVK.

It belongs to the bacterial ribosomal protein bS20 family.

Functionally, binds directly to 16S ribosomal RNA. The protein is Small ribosomal subunit protein bS20 of Saccharopolyspora erythraea (strain ATCC 11635 / DSM 40517 / JCM 4748 / NBRC 13426 / NCIMB 8594 / NRRL 2338).